The primary structure comprises 185 residues: Pro-adrenomedullin (185 aa).

Positions 1-21 (MKLVSIALMLLGSLAVLGADT) are cleaved as a signal peptide. Residue arginine 41 is modified to Arginine amide. Residues 45-91 (ELQASSSYPTGLVDEKTVPTQTLGLQDKQSTSSTPQASTQSTAHIRV) constitute a propeptide that is removed on maturation. Residues 68–89 (GLQDKQSTSSTPQASTQSTAHI) form a disordered region. The span at 73–87 (QSTSSTPQASTQSTA) shows a compositional bias: low complexity. The cysteines at positions 107 and 112 are disulfide-linked. Residues 125–185 (TDKDKDGMAP…HQDISRVSRL (61 aa)) are disordered. Tyrosine 143 bears the Tyrosine amide mark. Residues 150 to 185 (SLPEVLRARTVESSQEQTHSAPASPAHQDISRVSRL) constitute a propeptide, preproAM C-terminal fragment. The segment covering 160–170 (VESSQEQTHSA) has biased composition (polar residues).

It belongs to the adrenomedullin family. As to expression, expressed in adrenal glands, lung, kidney, heart, spleen, duodenum and submandibular glands.

The protein resides in the secreted. In terms of biological role, adrenomedullin/ADM and proadrenomedullin N-20 terminal peptide/PAMP are peptide hormones that act as potent hypotensive and vasodilatator agents. Numerous actions have been reported most related to the physiologic control of fluid and electrolyte homeostasis. Its function is as follows. ADM function is mediated by the CALCRL-RAMP2 and CALCRL-RAMP3 receptor complexes with ADM showing the highest potency for the CALCRL-RAMP2 complex. This chain is Pro-adrenomedullin, found in Rattus norvegicus (Rat).